Reading from the N-terminus, the 220-residue chain is MELYLDTSDVVAVKALSRIFPLAGVTTNPSIIAAGKKPLDVVLPQLHEAMGGQGRLFAQVMATTAEGMVNDALKLRSIIADIVVKVPVTAEGLAAIKMLKAEGIPTLGTAVYGAAQGLLSALAGAEYVAPYVNRIDAQGGSGIQTVTDLHQLLKMHAPQAKVLAASFKTPRQALDCLLAGCESITLPLDVAQQMISYPAVDAAVAKFEQDWQGAFGRTSI.

The Schiff-base intermediate with substrate role is filled by Lys-85.

It belongs to the transaldolase family. Type 3A subfamily. Homodecamer. Five subunits are arranged as a pentamer, and two ring-like pentamers pack like a donut to form the decamer.

The protein localises to the cytoplasm. It carries out the reaction beta-D-fructose 6-phosphate = dihydroxyacetone + D-glyceraldehyde 3-phosphate. With respect to regulation, inhibited by glycerol, inorganic phosphate and arabinose 5-phosphate. Its function is as follows. Catalyzes the reversible formation of fructose 6-phosphate from dihydroxyacetone (DHA) and D-glyceraldehyde 3-phosphate via an aldolization reaction. Can utilize several aldehydes as acceptor compounds in vitro, and hydroxyacetone (HA) or 1-hydroxy-butan-2-one as alternative donor substrate. Is also able to catalyze the direct stereoselective self-aldol addition of glycolaldehyde to furnish D-(-)-threose, and cross-aldol reactions of glycolaldehyde to other aldehyde acceptors. Is not able to cleave fructose, fructose 1-phosphate, glucose 6-phosphate, sedoheptulose 1,7-bisphosphate, xylulose 5-phosphate, ribulose 5-phosphate, and fructose 1,6-bisphosphate; cannot use dihydroxyacetone phosphate as donor compound nor D-glyceraldehyde as acceptor. Does not display transaldolase activity. This is Fructose-6-phosphate aldolase 1 (fsaA) from Escherichia coli (strain K12).